The sequence spans 524 residues: Excitatory amino acid transporter 3 (524 aa).

At 1–18 (MGKPARKGCDWKRFLRNN) the chain is on the cytoplasmic side. Residues 19–38 (WLLLSTVVAVVLGIVIGVLV) form a helical membrane-spanning segment. The Extracellular segment spans residues 39–61 (REYSKLSNLEKFYFSFPGEILMR). The helical transmembrane segment at 62 to 82 (MLKLVILPLIVSSMITGVATL) threads the bilayer. The Cytoplasmic segment spans residues 83–93 (DSNVSGKIGLR). A helical membrane pass occupies residues 94–114 (AVVYYFCTTLIAVILGIVLVV). Residues Tyr98, Thr101, and Thr102 each coordinate Na(+). Residues 115-205 (SIKPGVTQKV…KTKEYKVVGM (91 aa)) are Extracellular-facing. 2 N-linked (GlcNAc...) asparagine glycosylation sites follow: Asn178 and Asn195. The helical transmembrane segment at 206–229 (YSDGINVLGLIVFCLVLGIVIGRK) threads the bilayer. Residues 230–238 (WEKGQILVD) are Cytoplasmic-facing. Residues 239–266 (FFNALSDATMKIVQIIMCYMPIGILFLI) traverse the membrane as a helical segment. Over 267–286 (AGKIIEVEDWEIFRKLGLYM) the chain is Extracellular. A helical membrane pass occupies residues 287 to 308 (ATVLSGLAIHSIVILPLIYFII). Residues 309–313 (VRKNP) lie on the Cytoplasmic side of the membrane. Residues 314 to 344 (FQFAMGMAQALLTALMISSSSATLPVTFRCA) constitute an intramembrane region (discontinuously helical). Residues Ser331 and Ser333 each coordinate L-aspartate. Topologically, residues 345-353 (EEKNRVDKR) are cytoplasmic. Residues 354-380 (ITRFVLPVGATINMDGTALYEAVAAVF) traverse the membrane as a helical segment. 4 residues coordinate Na(+): Gly362, Thr364, Asn366, and Asp368. Thr370 is an L-aspartate binding site. At 381-393 (IAQLNDLDLSVGQ) the chain is on the extracellular side. Positions 394 to 427 (IITISVTATAASIGAAGVPQPGLVTMVIVLSAVG) form an intramembrane region, discontinuously helical. Residues Ser405, Ile406, and Ala408 each coordinate Na(+). Val411 provides a ligand contact to L-aspartate. The Extracellular segment spans residues 428-440 (LPAEDVTLIIAVD). The chain crosses the membrane as a helical span at residues 441–462 (WLLDRFRTMVNVLGDAFGTGIV). Residues Arg447, Thr448, and Asn451 each coordinate L-aspartate. Na(+)-binding residues include Asn451 and Asp455. Topologically, residues 463–524 (EKLSKKELEQ…TISFTQTSQF (62 aa)) are cytoplasmic. Phosphoserine occurs at positions 517 and 522.

Belongs to the dicarboxylate/amino acid:cation symporter (DAACS) (TC 2.A.23) family. SLC1A1 subfamily. In terms of assembly, homotrimer. Interacts with ARL6IP5. Interacts with RTN2 (via N-terminus); the interaction promotes cell surface expression of SLC1A1. Interacts with SORCS2; this interaction is important for normal expression at the cell membrane.

The protein resides in the cell membrane. It localises to the apical cell membrane. It is found in the synapse. The protein localises to the synaptosome. Its subcellular location is the early endosome membrane. The protein resides in the late endosome membrane. It localises to the recycling endosome membrane. It carries out the reaction K(+)(in) + L-glutamate(out) + 3 Na(+)(out) + H(+)(out) = K(+)(out) + L-glutamate(in) + 3 Na(+)(in) + H(+)(in). The catalysed reaction is K(+)(in) + L-aspartate(out) + 3 Na(+)(out) + H(+)(out) = K(+)(out) + L-aspartate(in) + 3 Na(+)(in) + H(+)(in). The enzyme catalyses D-aspartate(out) + K(+)(in) + 3 Na(+)(out) + H(+)(out) = D-aspartate(in) + K(+)(out) + 3 Na(+)(in) + H(+)(in). It catalyses the reaction K(+)(in) + L-cysteine(out) + 3 Na(+)(out) + H(+)(out) = K(+)(out) + L-cysteine(in) + 3 Na(+)(in) + H(+)(in). In terms of biological role, sodium-dependent, high-affinity amino acid transporter that mediates the uptake of L-glutamate and also L-aspartate and D-aspartate. Can also transport L-cysteine. Functions as a symporter that transports one amino acid molecule together with two or three Na(+) ions and one proton, in parallel with the counter-transport of one K(+) ion. Mediates Cl(-) flux that is not coupled to amino acid transport; this avoids the accumulation of negative charges due to aspartate and Na(+) symport. Plays an important role in L-glutamate and L-aspartate reabsorption in renal tubuli. Plays a redundant role in the rapid removal of released glutamate from the synaptic cleft, which is essential for terminating the postsynaptic action of glutamate. Contributes to glutathione biosynthesis and protection against oxidative stress via its role in L-glutamate and L-cysteine transport. Negatively regulated by ARL6IP5. This is Excitatory amino acid transporter 3 (SLC1A1) from Bos taurus (Bovine).